Reading from the N-terminus, the 393-residue chain is Pectate lyase A (393 aa).

The first 32 residues, 1–32, serve as a signal peptide directing secretion; sequence MMNKASGRSFTRSSKYLLATLIAGMMASGVSA. The Ca(2+) site is built by glutamate 174, aspartate 176, aspartate 216, and aspartate 220. Residue arginine 273 is part of the active site. A disulfide bridge links cysteine 330 with cysteine 358.

The protein belongs to the polysaccharide lyase 1 family. PLADES subfamily. The cofactor is Ca(2+).

It localises to the secreted. It catalyses the reaction Eliminative cleavage of (1-&gt;4)-alpha-D-galacturonan to give oligosaccharides with 4-deoxy-alpha-D-galact-4-enuronosyl groups at their non-reducing ends.. It functions in the pathway glycan metabolism; pectin degradation; 2-dehydro-3-deoxy-D-gluconate from pectin: step 2/5. Its function is as follows. Involved in maceration and soft-rotting of plant tissue. The sequence is that of Pectate lyase A (pelA) from Dickeya chrysanthemi (Pectobacterium chrysanthemi).